The chain runs to 99 residues: Transmembrane protein 14A (99 aa).

3 helical membrane-spanning segments follow: residues 1–21 (MDLIGFGYAALVTIGSVLGYK), 24–44 (GGVPSLIAGLSVGLLAGYGAY), and 79–99 (PAGLVAGLSLMMILRLVLLLL).

The protein belongs to the TMEM14 family.

It localises to the mitochondrion membrane. Its subcellular location is the endoplasmic reticulum membrane. Functionally, inhibits apoptosis via negative regulation of the mitochondrial outer membrane permeabilization involved in apoptotic signaling pathway. The chain is Transmembrane protein 14A (Tmem14a) from Mus musculus (Mouse).